The chain runs to 511 residues: Phosphoenolpyruvate carboxylase (511 aa).

This sequence belongs to the PEPCase type 2 family. As to quaternary structure, homotetramer. It depends on Mg(2+) as a cofactor.

The catalysed reaction is oxaloacetate + phosphate = phosphoenolpyruvate + hydrogencarbonate. Functionally, catalyzes the irreversible beta-carboxylation of phosphoenolpyruvate (PEP) to form oxaloacetate (OAA), a four-carbon dicarboxylic acid source for the tricarboxylic acid cycle. The sequence is that of Phosphoenolpyruvate carboxylase from Saccharolobus islandicus (strain Y.N.15.51 / Yellowstone #2) (Sulfolobus islandicus).